Reading from the N-terminus, the 269-residue chain is 3-methyl-2-oxobutanoate hydroxymethyltransferase (269 aa).

Residues D43 and D82 each contribute to the Mg(2+) site. Residues 43–44, D82, and K110 contribute to the 3-methyl-2-oxobutanoate site; that span reads DS. A Mg(2+)-binding site is contributed by E112. E179 serves as the catalytic Proton acceptor.

It belongs to the PanB family. As to quaternary structure, homodecamer; pentamer of dimers. Mg(2+) is required as a cofactor.

Its subcellular location is the cytoplasm. It carries out the reaction 3-methyl-2-oxobutanoate + (6R)-5,10-methylene-5,6,7,8-tetrahydrofolate + H2O = 2-dehydropantoate + (6S)-5,6,7,8-tetrahydrofolate. It participates in cofactor biosynthesis; (R)-pantothenate biosynthesis; (R)-pantoate from 3-methyl-2-oxobutanoate: step 1/2. Functionally, catalyzes the reversible reaction in which hydroxymethyl group from 5,10-methylenetetrahydrofolate is transferred onto alpha-ketoisovalerate to form ketopantoate. The polypeptide is 3-methyl-2-oxobutanoate hydroxymethyltransferase (Acinetobacter baumannii (strain AB307-0294)).